The chain runs to 428 residues: Large envelope protein (428 aa).

The N-myristoyl glycine; by host moiety is linked to residue Gly2. Residues 2-145 (GNNIKVTFDP…PPLRDTHPHL (144 aa)) form a pre-S1 region. The interval 2–204 (GNNIKVTFDP…PLTIGDPVLS (203 aa)) is pre-S. Over 2-211 (GNNIKVTFDP…VLSTEMSPSG (210 aa)) the chain is Virion surface; in external conformation. Residues 2–283 (GNNIKVTFDP…NGFRWMYLRR (282 aa)) are Intravirion; in internal conformation-facing. Asn3 carries N-linked (GlcNAc...) asparagine glycosylation. The disordered stretch occupies residues 110-144 (RDIPRGIVPPQTPSNRDQRRKPTPLTPPLRDTHPH). The pre-S2 stretch occupies residues 146–204 (TMKNQTGHLQGFAEGLRALTTSDHHNSAYGDPFTTLSPVVPTVSTTLSPPLTIGDPVLS). A helical transmembrane segment spans residues 212-232 (LLGLLAGLQVVYFLWTKILTI). The Intravirion; in external conformation segment spans residues 233-283 (AQSLDWWWTSLSFPGGIPECTGQNLQFQTCKHLPTSCPPTCNGFRWMYLRR). A helical transmembrane segment spans residues 284–304 (FIIYLLVLLLFLTFLLVLLDW). The Virion surface portion of the chain corresponds to 305–376 (KGLLPVCPMM…WALARFSWLS (72 aa)). Asn348 carries an N-linked (GlcNAc...) asparagine; by host glycan. Residues 377-397 (LLVPLLQWLGGISLTVWLLLI) traverse the membrane as a helical segment. Residues 398 to 403 (WMIWFW) lie on the Intravirion side of the membrane. A helical transmembrane segment spans residues 404-426 (GPVLMSILPPFIPIFALFFLIWA). The Virion surface portion of the chain corresponds to 427–428 (YI).

This sequence belongs to the orthohepadnavirus major surface antigen family. In its internal form (Li-HBsAg), interacts with the capsid protein and with the isoform S. Interacts with host chaperone CANX. In terms of assembly, associates with host chaperone CANX through its pre-S2 N glycan; this association may be essential for isoform M proper secretion. As to quaternary structure, interacts with isoform L. Interacts with the antigens of satellite virus HDV (HDVAgs); this interaction is required for encapsidation of HDV genomic RNA. Post-translationally, isoform M is N-terminally acetylated by host at a ratio of 90%, and N-glycosylated by host at the pre-S2 region. In terms of processing, myristoylated.

The protein localises to the virion membrane. The large envelope protein exists in two topological conformations, one which is termed 'external' or Le-HBsAg and the other 'internal' or Li-HBsAg. In its external conformation the protein attaches the virus to cell receptors and thereby initiating infection. This interaction determines the species specificity and liver tropism. This attachment induces virion internalization predominantly through caveolin-mediated endocytosis. The large envelope protein also assures fusion between virion membrane and endosomal membrane. In its internal conformation the protein plays a role in virion morphogenesis and mediates the contact with the nucleocapsid like a matrix protein. In terms of biological role, the middle envelope protein plays an important role in the budding of the virion. It is involved in the induction of budding in a nucleocapsid independent way. In this process the majority of envelope proteins bud to form subviral lipoprotein particles of 22 nm of diameter that do not contain a nucleocapsid. The protein is Large envelope protein of Ground squirrel hepatitis virus (strain 27) (GSHV).